We begin with the raw amino-acid sequence, 253 residues long: uncharacterized protein (253 aa).

Residues 175–184 (NPTQTSPGKP) show a composition bias toward polar residues. A disordered region spans residues 175–253 (NPTQTSPGKP…ATENEDRLPS (79 aa)). Ser180 carries the post-translational modification Phosphoserine. Composition is skewed to low complexity over residues 185-196 (STSESSQTDTST) and 203-214 (TPTTTRASSYTT). Residues 215-242 (LVSTSNQVSNEAEASAVETSANQAQNTE) are compositionally biased toward polar residues.

It belongs to the TRAPP small subunits family. BET3 subfamily.

This is an uncharacterized protein from Schizosaccharomyces pombe (strain 972 / ATCC 24843) (Fission yeast).